The chain runs to 479 residues: Neuronal acetylcholine receptor subunit alpha-9 (479 aa).

An N-terminal signal peptide occupies residues 1-25 (MNRPHSCLSFCWMYFAASGIRAVET). Residues 26–237 (ANGKYAQKLF…TFTLLLKRRS (212 aa)) are Extracellular-facing. Residue asparagine 57 is glycosylated (N-linked (GlcNAc...) asparagine). Cysteine 155 and cysteine 169 are joined by a disulfide. N-linked (GlcNAc...) asparagine glycosylation is present at asparagine 170. Na(+) is bound by residues serine 191 and aspartate 193. The cysteines at positions 219 and 220 are disulfide-linked. A run of 3 helical transmembrane segments spans residues 238–262 (SFYI…FYLP), 269–287 (VSLG…LMVA), and 302–323 (YYIA…VMNI). Residues 324–457 (HFCGAEARPV…WKKVAKVIDR (134 aa)) lie on the Cytoplasmic side of the membrane. The chain crosses the membrane as a helical span at residues 458–476 (FFMWIFFAMVFVMTVLIIA).

It belongs to the ligand-gated ion channel (TC 1.A.9) family. Acetylcholine receptor (TC 1.A.9.1) subfamily. Alpha-9/CHRNA9 sub-subfamily. In terms of assembly, forms homo- or heterooligomeric channels in conjunction with CHRNA10. The native outer hair cell receptor may be composed of CHRNA9:CHRNA10 heterooligomers. Found in the stoichiometric form (CHRNA9)2:(CHRNA10)3. In terms of tissue distribution, detected in the nasal epithelium, in the outer hair cells of the cochlea, in the pars tuberalis of the hypophysis, and in the developing muscle of the tongue. Also expressed in the neurons of dorsal root ganglia.

It is found in the synaptic cell membrane. The protein localises to the cell membrane. It catalyses the reaction Ca(2+)(in) = Ca(2+)(out). It carries out the reaction Mg(2+)(in) = Mg(2+)(out). The enzyme catalyses K(+)(in) = K(+)(out). The catalysed reaction is Na(+)(in) = Na(+)(out). With respect to regulation, activated by a myriad of ligands such as acetylcholine. AChR activity is inhibited by the antagonist alpha-conotoxins RgIA and GeXXA, small disulfide-constrained peptides from cone snails. Component of neuronal acetylcholine receptors (nAChRs) that function as pentameric, ligand-gated cation channels with high calcium permeability among other activities. nAChRs are excitatory neurotrasnmitter receptors formed by a collection of nAChR subunits known to mediate synaptic transmission in the nervous system and the neuromuscular junction. Each nAchR subunit confers differential attributes to channel properties, including activation, deactivation and desensitization kinetics, pH sensitivity, cation permeability, and binding to allosteric modulators. Forms either homopentamers or heteropentamers with CHRNA10. Expressed in the inner ear, in sympathetic neurons and in other non-neuronal cells, such as skin keratinocytes and lymphocytes. nAChR formed by CHRNA9:CHRNA10 mediate central nervous system control of auditory and vestibular sensory processing. The channel is permeable to a range of divalent cations including calcium, the influx of which may activate a potassium current which hyperpolarizes the cell membrane. In the ear, mediates synaptic transmission between efferent olivocochlear fibers and hair cells of the cochlea, this may lead to a reduction in basilar membrane motion, altering the activity of auditory nerve fibers and reducing the range of dynamic hearing. This may protect against acoustic trauma. May also regulate keratinocyte adhesion. In Rattus norvegicus (Rat), this protein is Neuronal acetylcholine receptor subunit alpha-9 (Chrna9).